The sequence spans 305 residues: Serine/threonine-protein phosphatase PP2A catalytic subunit (305 aa).

Mn(2+) is bound by residues Asp-53, His-55, Asp-81, and Asn-113. His-114 serves as the catalytic Proton donor. Residues His-163 and His-237 each coordinate Mn(2+).

This sequence belongs to the PPP phosphatase family. PP-2A subfamily. It depends on Mn(2+) as a cofactor.

It carries out the reaction O-phospho-L-seryl-[protein] + H2O = L-seryl-[protein] + phosphate. The catalysed reaction is O-phospho-L-threonyl-[protein] + H2O = L-threonyl-[protein] + phosphate. In Helianthus annuus (Common sunflower), this protein is Serine/threonine-protein phosphatase PP2A catalytic subunit.